Reading from the N-terminus, the 568-residue chain is COMPASS component cclA (568 aa).

Positions 1–113 (MASDSGTPPP…MRYKLAPPKP (113 aa)) are disordered. 2 stretches are compositionally biased toward basic and acidic residues: residues 68–77 (KESLKKRESK) and 89–98 (PDPKHREPKQ). A B30.2/SPRY domain is found at 160–353 (ADPGFPSSLY…IPIRFKQHIY (194 aa)).

This sequence belongs to the cclA family. Component of the COMPASS complex.

The protein resides in the nucleus. Its subcellular location is the chromosome. It localises to the telomere. In terms of biological role, component of the COMPASS (Set1C) complex that specifically mono-, di- and trimethylates histone H3 to form H3K4me1/2/3, which subsequently plays a role in telomere length maintenance and transcription elongation regulation. Controls the production of several secondary metabolites, including colletochlorins, higginsianins and sclerosporide. Plays a key role in mycelial growth, sporulation, spore germination and virulence. The protein is COMPASS component cclA of Colletotrichum higginsianum (strain IMI 349063) (Crucifer anthracnose fungus).